Consider the following 325-residue polypeptide: Cell wall mannoprotein PIR3 (325 aa).

An N-terminal signal peptide occupies residues 1–18 (MQYKKPLVVSALAATSLA). The propeptide occupies 19-67 (AYAPKDPWSTLTPSATYKGGITDYSSSFGIAIEAVATSASSVASSKAKR). PIR1/2/3 repeat units follow at residues 68–91 (AASQ…KKST), 92–109 (AAAV…AKST), 110–127 (AAAV…AKST), 128–145 (AAAV…AKST), 146–163 (AAAV…AKST), 164–181 (AAAA…TTST), 182–199 (KAAA…SKTT), and 200–217 (SGAS…AEVK).

It belongs to the PIR protein family. Post-translationally, covalently linked to beta-1,3-glucan of the inner cell wall layer via an alkali-sensitive ester linkage between the gamma-carboxyl group of glutamic acids, arising from specific glutamines within the PIR1/2/3 repeats, and hydroxyl groups of glucoses of beta-1,3-glucan chains. In terms of processing, O-glycosylated. Extensively O-mannosylated.

It localises to the secreted. The protein resides in the cell wall. Its function is as follows. Component of the outer cell wall layer. Required for stability of the cell wall and for optimal growth. Required for resistance against several antifungal and cell wall-perturbing agents. The protein is Cell wall mannoprotein PIR3 (PIR3) of Saccharomyces cerevisiae (strain ATCC 204508 / S288c) (Baker's yeast).